The primary structure comprises 687 residues: A-kinase anchor protein 8 (687 aa).

Residues 1-195 (MEQGYGGYGA…FLRGRGQGRF (195 aa)) are interaction with MCM2. The interaction with DPY30 stretch occupies residues 1 to 210 (MEQGYGGYGA…SSTFIRSDPF (210 aa)). Ser-72 carries the post-translational modification Phosphoserine. Disordered regions lie at residues 105 to 124 (KEGG…DRDS) and 185 to 218 (GFLR…ASEP). Residue Arg-109 is modified to Asymmetric dimethylarginine; alternate. At Arg-109 the chain carries Omega-N-methylarginine; alternate. Gly residues predominate over residues 109 to 118 (RGGISSGGEG). Residues 109-201 (RGGISSGGEG…QGRFQDRSNS (93 aa)) are interaction with DDX5. At Ser-199 the chain carries Phosphoserine. 2 positions are modified to omega-N-methylarginine: Arg-232 and Arg-276. The disordered stretch occupies residues 277–379 (SQTRIRDWPR…KQRRRDRMRD (103 aa)). Composition is skewed to basic and acidic residues over residues 280 to 294 (RIRD…ERFG) and 311 to 320 (PDAKLARADS). The Bipartite nuclear localization signal motif lies at 286–303 (RRRGFERFGPDNMGRKRK). Residue Lys-314 forms a Glycyl lysine isopeptide (Lys-Gly) (interchain with G-Cter in SUMO2) linkage. 3 positions are modified to phosphoserine: Ser-320, Ser-325, and Ser-336. Acidic residues predominate over residues 321 to 331 (DGDLSENDDGA). Over residues 335 to 357 (RSGDEEFRGEDDLCDSRKQRGEK) the composition is skewed to basic and acidic residues. An involved in chromatin-binding region spans residues 384 to 447 (RIQFACSVCK…NKKIEKRRQE (64 aa)). C2H2 AKAP95-type zinc fingers lie at residues 389–411 (CSVC…SKFH) and 478–501 (CLAC…SVDH). Residues 522 to 565 (SVLNNKHIVKMLEKYLKGEDPFVNETADLETEGDENVGEEKEET) are involved in condensin complex recruitment. Thr-552 carries the post-translational modification Phosphothreonine. The tract at residues 568-585 (EVAAEVLAEVITAAVKAV) is RII-binding. A required for interaction with MYCBP region spans residues 572 to 589 (EVLAEVITAAVKAVEGEG). A disordered region spans residues 624–659 (QTCEAASETRSIEDKTRGEAAEARNEAAMPTADAGS). Residues 633–648 (RSIEDKTRGEAAEARN) are compositionally biased toward basic and acidic residues. Phosphoserine is present on Ser-659.

This sequence belongs to the AKAP95 family. In terms of assembly, binds to the PKA RII-alpha regulatory subunit PRKAR2A. Interacts (via C-terminus) with FIGN. Interacts with NCAPD2, CCND3, CCNE1, MCM2, RPS6KA1, DDX5, PDE4A. Interacts with MYCBP; MYCBP is translocated to the nucleus and the interaction prevents the association of the PKA catalytic subunit leading to suppression of PKA activity. Interacts with CCND1, CASP3. Interacts with NFKB1; detetcted in the cytoplasm. Interacts with DPY30; mediating AKAP8 association with at least the MLL4/WBP7 HMT complex. Interacts with HDAC3; increased during mitosis. Interacts with GJA1; in the nucleus and in the nuclear membrane; the nuclear association increases with progress of cell cycle G1, S and G2 phase and decreases in M phase. Phosphorylated on tyrosine residues probably by SRC subfamily protein kinases; multiple phosphorylation is leading to dissociation from nuclear structures implicated in chromatin structural changes.

The protein resides in the nucleus matrix. It localises to the nucleus. The protein localises to the nucleolus. It is found in the cytoplasm. Anchoring protein that mediates the subcellular compartmentation of cAMP-dependent protein kinase (PKA type II). Acts as an anchor for a PKA-signaling complex onto mitotic chromosomes, which is required for maintenance of chromosomes in a condensed form throughout mitosis. Recruits condensin complex subunit NCAPD2 to chromosomes required for chromatin condensation; the function appears to be independent from PKA-anchoring. Specifically involved in recruitment of CAPD2 to, and condensation of maternal but not paternal chromosomes. May help to deliver cyclin D/E to CDK4 to facilitate cell cycle progression. Required for cell cycle G2/M transition and histone deacetylation during mitosis. In mitotic cells recruits HDAC3 to the vicinity of chromatin leading to deacetylation and subsequent phosphorylation at 'Ser-10' of histone H3; in this function may act redundantly with AKAP8L. Involved in nuclear retention of RPS6KA1 upon ERK activation thus inducing cell proliferation. May be involved in regulation of DNA replication by acting as scaffold for MCM2. Enhances HMT activity of the KMT2 family MLL4/WBP7 complex and is involved in transcriptional regulation. In a teratocarcinoma cell line is involved in retinoic acid-mediated induction of developmental genes implicating H3 'Lys-4' methylation. May be involved in recruitment of active CASP3 to the nucleus in apoptotic cells. May act as a carrier protein of GJA1 for its transport to the nucleus. May play a repressive role in the regulation of rDNA transcription. Preferentially binds GC-rich DNA in vitro. In cells, associates with ribosomal RNA (rRNA) chromatin, preferentially with rRNA promoter and transcribed regions. Involved in modulation of Toll-like receptor signaling. Required for the cAMP-dependent suppression of TNF-alpha in early stages of LPS-induced macrophage activation; the function probably implicates targeting of PKA to NFKB1. The sequence is that of A-kinase anchor protein 8 (Akap8) from Mus musculus (Mouse).